Consider the following 517-residue polypeptide: Cytochrome P450 78A5 (517 aa).

A helical transmembrane segment spans residues 20 to 40 (AFASVSLIIATVAFLLSPGGL). A heme-binding site is contributed by Cys-459.

This sequence belongs to the cytochrome P450 family. Requires heme as cofactor. Expressed in the periphery of the shoot apical meristem and inflorescence meristem, on the adaxial sides of developing floral organs and in developing ovules in the region where the integuments emerge.

It localises to the membrane. Its function is as follows. Plays a role in regulating directional growth at the meristem/organ boundary. Is required for the promotion of leaf and floral organ growth and for the prolongation of the plastochron. Promotes organ growth in a non-cell-autonomous manner and may generate a mobile growth signal distinct from the classical phytohormones that prevents premature arrest of proliferation, until the correct primordium size has been reached. Functions probably in association with CYP78A7 in regulating relative growth of the shoot apical meristem and plant organs. Is required locally in developing ovules to stimulates cell proliferation and promote seed growth. This is Cytochrome P450 78A5 (CYP78A5) from Arabidopsis thaliana (Mouse-ear cress).